Here is a 417-residue protein sequence, read N- to C-terminus: Serine hydroxymethyltransferase (417 aa).

Residues L121 and 125-127 (GHL) each bind (6S)-5,6,7,8-tetrahydrofolate. Residue K229 is modified to N6-(pyridoxal phosphate)lysine. 354-356 (SPF) lines the (6S)-5,6,7,8-tetrahydrofolate pocket.

This sequence belongs to the SHMT family. Homodimer. Pyridoxal 5'-phosphate is required as a cofactor.

The protein localises to the cytoplasm. It catalyses the reaction (6R)-5,10-methylene-5,6,7,8-tetrahydrofolate + glycine + H2O = (6S)-5,6,7,8-tetrahydrofolate + L-serine. It functions in the pathway one-carbon metabolism; tetrahydrofolate interconversion. It participates in amino-acid biosynthesis; glycine biosynthesis; glycine from L-serine: step 1/1. Catalyzes the reversible interconversion of serine and glycine with tetrahydrofolate (THF) serving as the one-carbon carrier. This reaction serves as the major source of one-carbon groups required for the biosynthesis of purines, thymidylate, methionine, and other important biomolecules. Also exhibits THF-independent aldolase activity toward beta-hydroxyamino acids, producing glycine and aldehydes, via a retro-aldol mechanism. The sequence is that of Serine hydroxymethyltransferase from Azotobacter vinelandii (strain DJ / ATCC BAA-1303).